The following is a 705-amino-acid chain: Endoglucanase (705 aa).

The first 23 residues, 1-23, serve as a signal peptide directing secretion; it reads MKILKNCILLIIFGLLSTQLINA. N-linked (GlcNAc...) asparagine glycosylation is present at asparagine 75. The active-site Nucleophile is aspartate 85. Catalysis depends on residues histidine 390, aspartate 428, and glutamate 437. The tract at residues 455 to 556 is disordered; that stretch reads NPSSTSVPTT…TPTETPSSGE (102 aa). The segment covering 462 to 552 has biased composition (low complexity); the sequence is PTTTPTVTET…TPTVTPTETP (91 aa). A pro/Thr repeats ('hinge') (Pro/Thr box) region spans residues 463–552; it reads TTTPTVTETP…TPTVTPTETP (90 aa).

Belongs to the glycosyl hydrolase 9 (cellulase E) family.

It catalyses the reaction Endohydrolysis of (1-&gt;4)-beta-D-glucosidic linkages in cellulose, lichenin and cereal beta-D-glucans.. In terms of biological role, may digest the spore cell wall during germination, to release the enclosed amoeba. The polypeptide is Endoglucanase (celA) (Dictyostelium discoideum (Social amoeba)).